We begin with the raw amino-acid sequence, 168 residues long: Ribosome maturation factor RimP (168 aa).

This sequence belongs to the RimP family.

It localises to the cytoplasm. Functionally, required for maturation of 30S ribosomal subunits. This is Ribosome maturation factor RimP from Bordetella parapertussis (strain 12822 / ATCC BAA-587 / NCTC 13253).